The primary structure comprises 1171 residues: Structural maintenance of chromosomes protein 2-2 (1171 aa).

Residues 2–1158 form the Zinc-hook domain; that stretch reads HIKEICLEGF…DVLFRTKFVD (1157 aa). 32–39 contacts ATP; sequence GLNGSGKS. Residues 172–510 adopt a coiled-coil conformation; it reads RMYENKKEAA…LANVQFTYRD (339 aa). Residues 518-635 form the SMC hinge domain; that stretch reads SKVKGVVAKL…KTTDAAKEVA (118 aa). Residues 674–1026 are a coiled coil; sequence HDLAEAETKF…LDEKKKETLK (353 aa).

This sequence belongs to the SMC family. SMC2 subfamily. As to quaternary structure, forms a heterodimer with SMC4. Component of the condensin complex, which contains the SMC2 and SMC4 heterodimer, and three non SMC subunits that probably regulate the complex: CAPH, CAPD2 and CAPG. Highly expressed in roots and young floral buds.

Its subcellular location is the nucleus. In terms of biological role, central component of the condensin complex, a complex required for conversion of interphase chromatin into mitotic-like condense chromosomes. The condensin complex probably introduces positive supercoils into relaxed DNA in the presence of type I topoisomerases and converts nicked DNA into positive knotted forms in the presence of type II topoisomerases. Also involved in chromosome segregation in meiosis. The chain is Structural maintenance of chromosomes protein 2-2 (SMC2-2) from Arabidopsis thaliana (Mouse-ear cress).